We begin with the raw amino-acid sequence, 979 residues long: Calsyntenin-1 (979 aa).

A signal peptide spans 1 to 28 (MLRRPAPALAPAVRLLLAGLLCGGGVWA). Residues 29-859 (ARVNKHKPWL…PHPFAVVPST (831 aa)) lie on the Extracellular side of the membrane. 2 Cadherin domains span residues 38–164 (LEPT…APVF) and 165–265 (KEKS…SPGW). 3 N-linked (GlcNAc...) asparagine glycosylation sites follow: asparagine 346, asparagine 366, and asparagine 515. Residues 860–880 (ATVVIVVCVSFLVFMIILGVF) traverse the membrane as a helical segment. The Cytoplasmic portion of the chain corresponds to 881–979 (RIRAAHQRTM…LEWDDSTLSY (99 aa)). The disordered stretch occupies residues 915–979 (METYEDQHSS…LEWDDSTLSY (65 aa)). Residues 925-959 (EEEEEEEEEEESEDGEEEEDITSAESESSEEEEGG) are compositionally biased toward acidic residues.

It belongs to the calsyntenin family. As to quaternary structure, directly interacts with APBA2. Forms a tripartite complex with APBA2 and APP. The CTF1 chain interacts with PSEN1. Interacts with KLC1 and APBB1. Interacts with APBB1; this interaction stabilizes AlcICD metabolism. In terms of assembly, interacts with PSEN1. Proteolytically processed under normal cellular conditions. A primary zeta-cleavage generates a large extracellular (soluble) N-terminal domain (sAlc) and a short C-terminal transmembrane fragment (CTF1). A secondary cleavage catalyzed by presenilin gamma-secretase within the transmembrane domain releases the beta-Alc-alpha chain in the extracellular milieu and produces an intracellular fragment (AlcICD). Beta-Alc-alpha secretion is largely dependent upon PSEN1 and PSEN2. This processing is strongly suppressed in the tripartite complex formed with APBA2 and APP, which seems to prevent the association with PSEN1. Highly expressed in the brain (at protein level), with over 90% of the neurons expressing detectable amounts. In the brain, relatively high levels in the cerebral cortex, striatum, hippocampus and thalamus. Moderate levels in the cerebellum. Low levels in the olfactory bulb, midbrain and pons (at protein level). Not detected in Purkinje cells. Expressed at low levels in the lung (at protein level). At the mRNA level, weakly detected in the kidney, lung, skeletal muscle, heart and testis. Not expressed in the sciatic nerve fiber.

The protein resides in the postsynaptic cell membrane. It is found in the endoplasmic reticulum membrane. It localises to the golgi apparatus membrane. Its subcellular location is the cell projection. The protein localises to the neuron projection. The protein resides in the vesicle. It is found in the nucleus. Postsynaptic adhesion molecule that binds to presynaptic neurexins to mediate both excitatory and inhibitory synapse formation. Promotes synapse development by acting as a cell adhesion molecule at the postsynaptic membrane, which associates with neurexin-alpha at the presynaptic membrane. Also functions as a cargo in axonal anterograde transport by acting as a molecular adapter that promotes KLC1 association with vesicles. Complex formation with APBA2 and APP, stabilizes APP metabolism and enhances APBA2-mediated suppression of beta-APP40 secretion, due to the retardation of intracellular APP maturation. In terms of biological role, as intracellular fragment AlcICD, suppresses APBB1-dependent transactivation stimulated by APP C-terminal intracellular fragment (AICD), most probably by competing with AICD for APBB1-binding. Functionally, in complex with APBA2 and C99, a C-terminal APP fragment, abolishes C99 interaction with PSEN1 and thus APP C99 cleavage by gamma-secretase, most probably through stabilization of the direct interaction between APBA2 and APP. In Mus musculus (Mouse), this protein is Calsyntenin-1.